The primary structure comprises 286 residues: 4-hydroxybenzoate octaprenyltransferase (286 aa).

7 helical membrane passes run 21 to 40 (GTLL…AGGM), 96 to 116 (LFVI…GLVV), 142 to 162 (FLGV…TGEV), 167 to 187 (WWLF…YAMV), 210 to 230 (QIIG…GWSA), 235 to 255 (LYGL…MLIF), and 266 to 286 (FLNN…DYLF).

This sequence belongs to the UbiA prenyltransferase family. Mg(2+) is required as a cofactor.

Its subcellular location is the cell inner membrane. The catalysed reaction is all-trans-octaprenyl diphosphate + 4-hydroxybenzoate = 4-hydroxy-3-(all-trans-octaprenyl)benzoate + diphosphate. It participates in cofactor biosynthesis; ubiquinone biosynthesis. Its function is as follows. Catalyzes the prenylation of para-hydroxybenzoate (PHB) with an all-trans polyprenyl group. Mediates the second step in the final reaction sequence of ubiquinone-8 (UQ-8) biosynthesis, which is the condensation of the polyisoprenoid side chain with PHB, generating the first membrane-bound Q intermediate 3-octaprenyl-4-hydroxybenzoate. The sequence is that of 4-hydroxybenzoate octaprenyltransferase from Shewanella sp. (strain MR-4).